Consider the following 360-residue polypeptide: Protein-glutamate methylesterase/protein-glutamine glutaminase 3 (360 aa).

The 118-residue stretch at 14–131 folds into the Response regulatory domain; the sequence is RVLVIDDSAT…AEGVQAYAEE (118 aa). 4-aspartylphosphate is present on D65. One can recognise a CheB-type methylesterase domain in the interval 169-360; that stretch reads AGKDGRVVAV…AGKLMELDGA (192 aa). Active-site residues include S181, H207, and D303.

This sequence belongs to the CheB family. Post-translationally, phosphorylated by CheA. Phosphorylation of the N-terminal regulatory domain activates the methylesterase activity.

The protein resides in the cytoplasm. It catalyses the reaction [protein]-L-glutamate 5-O-methyl ester + H2O = L-glutamyl-[protein] + methanol + H(+). The catalysed reaction is L-glutaminyl-[protein] + H2O = L-glutamyl-[protein] + NH4(+). In terms of biological role, involved in chemotaxis. Part of a chemotaxis signal transduction system that modulates chemotaxis in response to various stimuli. Catalyzes the demethylation of specific methylglutamate residues introduced into the chemoreceptors (methyl-accepting chemotaxis proteins or MCP) by CheR. Also mediates the irreversible deamidation of specific glutamine residues to glutamic acid. This chain is Protein-glutamate methylesterase/protein-glutamine glutaminase 3, found in Burkholderia thailandensis (strain ATCC 700388 / DSM 13276 / CCUG 48851 / CIP 106301 / E264).